A 236-amino-acid chain; its full sequence is uncharacterized protein (236 aa).

This is an uncharacterized protein from Ureaplasma parvum serovar 3 (strain ATCC 700970).